A 508-amino-acid polypeptide reads, in one-letter code: Photosystem II CP47 reaction center protein (508 aa).

Transmembrane regions (helical) follow at residues 21 to 36 (AVHLMHTSLVSGWAGS), 101 to 115 (IILSGLLFMAAIWHW), 140 to 156 (GIHLLLSGILCFGFGAF), 203 to 218 (IAAGILGIIAGLFHLS), 237 to 252 (VLSSSIAAVFWAAFVV), and 457 to 472 (IFALLFFFGHIWHGAR).

It belongs to the PsbB/PsbC family. PsbB subfamily. As to quaternary structure, PSII is composed of 1 copy each of membrane proteins PsbA, PsbB, PsbC, PsbD, PsbE, PsbF, PsbH, PsbI, PsbJ, PsbK, PsbL, PsbM, PsbT, PsbY, PsbZ, Psb30/Ycf12, at least 3 peripheral proteins of the oxygen-evolving complex and a large number of cofactors. It forms dimeric complexes. The cofactor is Binds multiple chlorophylls. PSII binds additional chlorophylls, carotenoids and specific lipids..

The protein localises to the plastid. It is found in the chloroplast thylakoid membrane. In terms of biological role, one of the components of the core complex of photosystem II (PSII). It binds chlorophyll and helps catalyze the primary light-induced photochemical processes of PSII. PSII is a light-driven water:plastoquinone oxidoreductase, using light energy to abstract electrons from H(2)O, generating O(2) and a proton gradient subsequently used for ATP formation. The polypeptide is Photosystem II CP47 reaction center protein (Bigelowiella natans (Pedinomonas minutissima)).